We begin with the raw amino-acid sequence, 457 residues long: tRNA-2-methylthio-N(6)-dimethylallyladenosine synthase (457 aa).

Residues 4 to 119 (RNFHIITFGC…APDAIERLYA (116 aa)) form the MTTase N-terminal domain. 6 residues coordinate [4Fe-4S] cluster: Cys13, Cys48, Cys82, Cys164, Cys168, and Cys171. The 236-residue stretch at 150 to 385 (NTLALMAYVN…QATQLEHSTS (236 aa)) folds into the Radical SAM core domain. The TRAM domain maps to 388 to 456 (KSRVGVETTV…KHSLVAEPLI (69 aa)).

It belongs to the methylthiotransferase family. MiaB subfamily. As to quaternary structure, monomer. The cofactor is [4Fe-4S] cluster.

Its subcellular location is the cytoplasm. The enzyme catalyses N(6)-dimethylallyladenosine(37) in tRNA + (sulfur carrier)-SH + AH2 + 2 S-adenosyl-L-methionine = 2-methylsulfanyl-N(6)-dimethylallyladenosine(37) in tRNA + (sulfur carrier)-H + 5'-deoxyadenosine + L-methionine + A + S-adenosyl-L-homocysteine + 2 H(+). Its function is as follows. Catalyzes the methylthiolation of N6-(dimethylallyl)adenosine (i(6)A), leading to the formation of 2-methylthio-N6-(dimethylallyl)adenosine (ms(2)i(6)A) at position 37 in tRNAs that read codons beginning with uridine. This chain is tRNA-2-methylthio-N(6)-dimethylallyladenosine synthase, found in Lawsonia intracellularis (strain PHE/MN1-00).